Reading from the N-terminus, the 300-residue chain is Probable lipid kinase YegS-like (300 aa).

One can recognise a DAGKc domain in the interval 1 to 129; it reads MSKKALLILH…CDVIRVNNHY (129 aa). Residues Thr38, 64-70, and Thr92 each bind ATP; that span reads GDGSVRD. Residues Leu210, Asp213, and Leu215 each coordinate Mg(2+). Catalysis depends on Glu272, which acts as the Proton acceptor.

Belongs to the diacylglycerol/lipid kinase family. YegS lipid kinase subfamily. Requires Mg(2+) as cofactor. It depends on Ca(2+) as a cofactor.

It localises to the cytoplasm. Its function is as follows. Probably phosphorylates lipids; the in vivo substrate is unknown. This Alcanivorax borkumensis (strain ATCC 700651 / DSM 11573 / NCIMB 13689 / SK2) protein is Probable lipid kinase YegS-like.